The primary structure comprises 342 residues: UDP-xylose transporter 1 (342 aa).

The next 10 membrane-spanning stretches (helical) occupy residues 7–27, 36–56, 75–95, 100–120, 132–152, 154–174, 184–204, 221–241, 250–270, and 280–300; these read MQMGVIGALFLSVASSVSIVI, LGFPFATTLTSWHLMVTYCTL, VVLFGLLNGISIGLLNLSLGF, FYQMTKLAIIPFTVLLETLFL, LFLLLVGVGIASITDLQLNFV, SVLSLLAIATTCVGQILTNTI, QLLYQSAPFQAAILFVSGPFV, IVVGFITLSCLIAVSVNFSTF, VTYQVLGHLKTCLVLAFGYTL, and IAGILIAVLGMLLYSYFCSVA. Residues 305–342 form a disordered region; it reads QASSDSTFLGKDRDTTPLLGQENENHHEAKKLDKHSPV. The span at 327–342 shows a compositional bias: basic and acidic residues; it reads NENHHEAKKLDKHSPV.

Belongs to the TPT transporter family. TPT (TC 2.A.7.9) subfamily. In terms of tissue distribution, ubiquitous.

It localises to the golgi apparatus membrane. It is found in the endoplasmic reticulum membrane. Functionally, nucleotide-sugar transporter that transports UDP-xylose and UMP in a strict counter-exchange mode. The protein is UDP-xylose transporter 1 of Arabidopsis thaliana (Mouse-ear cress).